Reading from the N-terminus, the 488-residue chain is Proline--tRNA ligase (488 aa).

It belongs to the class-II aminoacyl-tRNA synthetase family. ProS type 3 subfamily. As to quaternary structure, homodimer.

It is found in the cytoplasm. It catalyses the reaction tRNA(Pro) + L-proline + ATP = L-prolyl-tRNA(Pro) + AMP + diphosphate. In terms of biological role, catalyzes the attachment of proline to tRNA(Pro) in a two-step reaction: proline is first activated by ATP to form Pro-AMP and then transferred to the acceptor end of tRNA(Pro). The polypeptide is Proline--tRNA ligase (Pyrobaculum aerophilum (strain ATCC 51768 / DSM 7523 / JCM 9630 / CIP 104966 / NBRC 100827 / IM2)).